Here is a 322-residue protein sequence, read N- to C-terminus: MTNVTYLDFEKAIGELDAKIDALRCSEDESAIDLSEEINRLSARSEKLTKELYERLTPWQIVQVARHPARPYTLDYVNFIFTDFHELHGDRSYADDQSIVGGLARFNDRPCVVVGHQKGRNTKERAMRNFGYPRPEGYRKALRLFKLAEKFRLPIFTFIDTPGAWPGIDAEEHNQSEAIGRNLMEMASLQTPIITTVIGEGGSGGALAIGVGDVSIMLQFSTYSVISPESCSSILWKNPNYAEQAANALGLTAHRLKALGLIDKIANEPVGGAHRDPQQMALMLKRVLQESLRNVESLDAKQLLVRRHERLMHYGKFRETAV.

A CoA carboxyltransferase C-terminal domain is found at 37 to 294 (EINRLSARSE…KRVLQESLRN (258 aa)).

This sequence belongs to the AccA family. As to quaternary structure, acetyl-CoA carboxylase is a heterohexamer composed of biotin carboxyl carrier protein (AccB), biotin carboxylase (AccC) and two subunits each of ACCase subunit alpha (AccA) and ACCase subunit beta (AccD).

Its subcellular location is the cytoplasm. It carries out the reaction N(6)-carboxybiotinyl-L-lysyl-[protein] + acetyl-CoA = N(6)-biotinyl-L-lysyl-[protein] + malonyl-CoA. The protein operates within lipid metabolism; malonyl-CoA biosynthesis; malonyl-CoA from acetyl-CoA: step 1/1. Its function is as follows. Component of the acetyl coenzyme A carboxylase (ACC) complex. First, biotin carboxylase catalyzes the carboxylation of biotin on its carrier protein (BCCP) and then the CO(2) group is transferred by the carboxyltransferase to acetyl-CoA to form malonyl-CoA. Functionally, confers resistance to the endogenous polyketide antibiotic thailandamide. Can replace the endogenous gene in S.typhimurium, conferring slow growth and resistance to thailandamide. Can also replace the endogenous gene in E.coli, conferring resistance to thailandamide. The chain is Acetyl-coenzyme A carboxylase carboxyl transferase subunit alpha 2 from Burkholderia thailandensis (strain ATCC 700388 / DSM 13276 / CCUG 48851 / CIP 106301 / E264).